The chain runs to 263 residues: MLIEQLWTANAYRNFNYLIACPETGEALAIDPLDHRQCLATAKRNGWRITQIFNTHEHGDHTGGNEAIIAQTKGKLLAHHKARDKIRGIDEGLAAGDTVKVGNGVALKVLDTPGHTMSHLCLFAPSNPPALFCGDTLFNAGAGNCHNGGDPNALYATFTQQLALLPCNTRIYPGHEYIENNLGFTLDREPDNEQAMALLAEVKSQDPNHAFVSTLALEKEINTFFRLDNPTLITKLRETFPDLPRVPDPKTVFLKLRELRNKW.

Positions 56, 58, 60, 61, 115, 135, and 175 each coordinate Zn(2+).

Belongs to the metallo-beta-lactamase superfamily. Glyoxalase II family. As to quaternary structure, monomer. Requires Zn(2+) as cofactor.

It catalyses the reaction an S-(2-hydroxyacyl)glutathione + H2O = a 2-hydroxy carboxylate + glutathione + H(+). Its pathway is secondary metabolite metabolism; methylglyoxal degradation; (R)-lactate from methylglyoxal: step 2/2. Its function is as follows. Thiolesterase that catalyzes the hydrolysis of S-D-lactoyl-glutathione to form glutathione and D-lactic acid. The polypeptide is Hydroxyacylglutathione hydrolase (Nitrosococcus oceani (strain ATCC 19707 / BCRC 17464 / JCM 30415 / NCIMB 11848 / C-107)).